The following is a 326-amino-acid chain: Protease HtpX homolog (326 aa).

Transmembrane regions (helical) follow at residues 10 to 30 (LNMA…ALAV) and 41 to 61 (VGLM…QWLF). H147 is a binding site for Zn(2+). E148 is a catalytic residue. H151 contacts Zn(2+). 2 helical membrane-spanning segments follow: residues 159–179 (LLMA…WIFW) and 197–217 (LLFL…LLVL). E224 provides a ligand contact to Zn(2+).

It belongs to the peptidase M48B family. Zn(2+) is required as a cofactor.

The protein localises to the cell membrane. The polypeptide is Protease HtpX homolog (Saccharolobus islandicus (strain Y.N.15.51 / Yellowstone #2) (Sulfolobus islandicus)).